Reading from the N-terminus, the 370-residue chain is MASMIALLTWALALLPALASAQTQKGFWDYFSQSSGDKGKAEQVQRQKLAWEPTSLKDSLEQDLSNIDKFLEKLGPLSGQAREPPALPQDPADMRRQLQEELVEVRARLEPYMAEAHEQVGWNLESLRRQLKPYTAELMEQVALRVQELQEQLRVVGEGTKAQLLGGVDEARGLLRELQNLVAHHTGRVQALFHPYAQRLVSGIGRHVQELHRSVAPHAVASPARLSRCVQTLSRKLTLKAKALHARIQQNLDQLREELSAFAGARADGAVEGTSQDPQVLSQEVRQRLQAFRQDTFLQIADFTRAMDQETEEVQLQLAPPPPGHSAFAPEFLQADSGKALSKLQARLEDLWEDINYSLHDHGLGHQEEP.

Residues 1-21 form the signal peptide; that stretch reads MASMIALLTWALALLPALASA. Ser59 is modified (phosphoserine).

Belongs to the apolipoprotein A1/A4/E family. In terms of assembly, interacts with GPIHBP1. Interacts with SORL1; this interaction leads to APOA5 internalization and sorting either to lysosomes and degradation, or to the trans-Golgi network.

The protein localises to the secreted. The protein resides in the early endosome. It localises to the late endosome. Its subcellular location is the golgi apparatus. It is found in the trans-Golgi network. Minor apolipoprotein mainly associated with HDL and to a lesser extent with VLDL. May also be associated with chylomicrons. Important determinant of plasma triglyceride (TG) levels by both being a potent stimulator of apo-CII lipoprotein lipase (LPL) TG hydrolysis and an inhibitor of the hepatic VLDL-TG production rate (without affecting the VLDL-apoB production rate). Activates poorly lecithin:cholesterol acyltransferase (LCAT) and does not enhance efflux of cholesterol from macrophages. Binds heparin. The chain is Apolipoprotein A-V (APOA5) from Acinonyx jubatus (Cheetah).